Reading from the N-terminus, the 840-residue chain is DNA helicase MCM8 (840 aa).

The disordered stretch occupies residues 16 to 54 (QSWKRGRGGGNFSGKWREREHRPDLSKTTGKRTSEQTPQ). Positions 30–40 (KWREREHRPDL) are enriched in basic and acidic residues. Positions 402-609 (LFKLIVNSLC…HHDHLLSEHV (208 aa)) constitute an MCM domain. 454 to 461 (GDPGLGKS) contributes to the ATP binding site. Ser-630 is modified (phosphoserine).

Belongs to the MCM family. Component of the MCM8-MCM9 complex, which forms a hexamer composed of MCM8 and MCM9. Interacts with the DNA mismatch repair (MMR) complex composed at least of MSH2, MSH3, MSH6, PMS1 and MLH1. Interacts with RAD51; the interaction recruits RAD51 to DNA damage sites. Interacts with the MRN complex composed of MRE11, RAD50 and NBN/NBS1. Interacts with CDC6 and ORC2. Interacts with HROB; the interaction recruits the MCM8-MCM9 complex to DNA damage sites. Highest levels in placenta, lung and pancreas. Low levels in skeletal muscle and kidney. Expressed in various tumors with highest levels in colon and lung cancers.

The protein resides in the nucleus. Its subcellular location is the chromosome. It carries out the reaction ATP + H2O = ADP + phosphate + H(+). Its function is as follows. Component of the MCM8-MCM9 complex, a complex involved in the repair of double-stranded DNA breaks (DBSs) and DNA interstrand cross-links (ICLs) by homologous recombination (HR). Required for DNA resection by the MRE11-RAD50-NBN/NBS1 (MRN) complex by recruiting the MRN complex to the repair site and by promoting the complex nuclease activity. Probably by regulating the localization of the MNR complex, indirectly regulates the recruitment of downstream effector RAD51 to DNA damage sites including DBSs and ICLs. The MCM8-MCM9 complex is dispensable for DNA replication and S phase progression. However, may play a non-essential for DNA replication: may be involved in the activation of the prereplicative complex (pre-RC) during G(1) phase by recruiting CDC6 to the origin recognition complex (ORC). Probably by regulating HR, plays a key role during gametogenesis. Stabilizes MCM9 protein. The chain is DNA helicase MCM8 (MCM8) from Homo sapiens (Human).